We begin with the raw amino-acid sequence, 252 residues long: Floral homeotic protein AGAMOUS (252 aa).

One can recognise an MADS-box domain in the interval arginine 19 to tyrosine 73. One can recognise a K-box domain in the interval alanine 103 to asparagine 193.

It is found in the nucleus. Probable transcription factor involved in regulating genes that determines stamen and carpel development in wild-type flowers. The sequence is that of Floral homeotic protein AGAMOUS (AG1) from Brassica napus (Rape).